The following is a 233-amino-acid chain: Chaperone protein MrkB (233 aa).

An N-terminal signal peptide occupies residues 1 to 18; the sequence is MKRIALFFCFIFSFAAHA.

Belongs to the periplasmic pilus chaperone family.

It is found in the periplasm. Functionally, mediates assembly of pili by forming soluble multimeric complexes with pili subunits as an intermediate step in the assembly process. This protein is involved in type 3 pili assembly. The sequence is that of Chaperone protein MrkB (mrkB) from Klebsiella pneumoniae.